Here is a 76-residue protein sequence, read N- to C-terminus: Acyl carrier protein (76 aa).

One can recognise a Carrier domain in the interval 1 to 74 (MEERIKEIIA…DVINYIKEKK (74 aa)). S34 is modified (O-(pantetheine 4'-phosphoryl)serine).

Belongs to the acyl carrier protein (ACP) family. In terms of processing, 4'-phosphopantetheine is transferred from CoA to a specific serine of apo-ACP by AcpS. This modification is essential for activity because fatty acids are bound in thioester linkage to the sulfhydryl of the prosthetic group.

It localises to the cytoplasm. The protein operates within lipid metabolism; fatty acid biosynthesis. Functionally, carrier of the growing fatty acid chain in fatty acid biosynthesis. This Persephonella marina (strain DSM 14350 / EX-H1) protein is Acyl carrier protein.